A 710-amino-acid chain; its full sequence is Solute carrier organic anion transporter family member 3A1 (710 aa).

M1 is modified (N-acetylmethionine). The segment covering 1–15 has biased composition (gly residues); the sequence is MQGKKPGGSSGGGRS. The interval 1 to 25 is disordered; that stretch reads MQGKKPGGSSGGGRSGELQGDEAQR. Residues 1–40 are Cytoplasmic-facing; sequence MQGKKPGGSSGGGRSGELQGDEAQRNKKKKKKVSCFSNIK. A helical membrane pass occupies residues 41–60; that stretch reads IFLVSECALMLAQGTVGAYL. The Extracellular portion of the chain corresponds to 61-79; it reads VSVLTTLERRFNLQSADVG. Residues 80-100 traverse the membrane as a helical segment; that stretch reads VIASSFEIGNLALILFVSYFG. The Cytoplasmic segment spans residues 101-106; sequence ARGHRP. The chain crosses the membrane as a helical span at residues 107–131; the sequence is RLIGCGGIVMALGALLSALPEFLTH. The Extracellular segment spans residues 132 to 174; sequence QYKYEAGEIRWGAEGRDVCATNGSSSDEGPDPDLICRNRTATN. Residues N153 and N169 are each glycosylated (N-linked (GlcNAc...) asparagine). The chain crosses the membrane as a helical span at residues 175–203; the sequence is MMYLLLIGAQVLLGIGATPVQPLGVSYID. The Cytoplasmic portion of the chain corresponds to 204-222; sequence DHVRRKDSSLYIGILFTML. Residues 223-243 traverse the membrane as a helical segment; that stretch reads VFGPACGFILGSFCTKIYVDA. The Extracellular portion of the chain corresponds to 244-261; sequence VFIDTSNLDITPDDPRWI. A helical membrane pass occupies residues 262–286; sequence GAWWGGFLLCGALLFFSSLLMFGFP. Residues 287–344 are Cytoplasmic-facing; sequence QSLPPHSDPGMESEQAMLPEREYERPKPSNGVLRHPLEPDSSASCFQQLRVIPKVTKH. The chain crosses the membrane as a helical span at residues 345 to 366; sequence LLSNPVFTCIVLAACMEIAVVA. Over 367–386 the chain is Extracellular; the sequence is GFAAFLGKYLEQQFNLTTSS. N381 carries an N-linked (GlcNAc...) asparagine glycan. Residues 387-410 traverse the membrane as a helical segment; that stretch reads ANQLLGMTAIPCACLGIFLGGLLV. Residues 411–414 lie on the Cytoplasmic side of the membrane; that stretch reads KKLS. The helical transmembrane segment at 415–438 threads the bilayer; sequence LSALGAIRMAMLVNLVSTACYVSF. Topologically, residues 439-539 are extracellular; sequence LFLGCDTGPV…PGCQEAFLTF (101 aa). A glycan (N-linked (GlcNAc...) asparagine) is linked at N457. In terms of domain architecture, Kazal-like spans 465–513; the sequence is LDPYSPCNNNCECQTDSFTPVCGADGITYLSACFAGCNSTNLTGCACLT. Disulfide bonds link C471–C497, C475–C486, and C477–C501. Residues N502, N505, and N519 are each glycosylated (N-linked (GlcNAc...) asparagine). A helical membrane pass occupies residues 540–562; sequence LCVMCVCSLIGAMAQTPSVIILI. At 563 to 571 the chain is on the cytoplasmic side; it reads RTVSPELKS. The chain crosses the membrane as a helical span at residues 572–597; the sequence is YALGVLFLLLRLLGFIPPPLIFGAGI. Residues 598-630 lie on the Extracellular side of the membrane; sequence DSTCLFWSTFCGEQGACVLYDNVVYRYLYVSIA. A helical membrane pass occupies residues 631–648; that stretch reads IALKSFAFILYTTTWQCL. The Cytoplasmic portion of the chain corresponds to 649-705; sequence RKNYKRYIKNHEGGLSTSEFFASTLTLDNLGRDPVPAHQTHRTKFIYNLEDHEWCEN.

This sequence belongs to the organo anion transporter (TC 2.A.60) family. As to expression, widely expressed.

The protein localises to the basolateral cell membrane. Its subcellular location is the apical cell membrane. It is found in the basal cell membrane. The enzyme catalyses L-thyroxine(out) = L-thyroxine(in). It carries out the reaction prostaglandin E1(out) = prostaglandin E1(in). The catalysed reaction is prostaglandin E2(out) = prostaglandin E2(in). It catalyses the reaction prostaglandin F2alpha(out) = prostaglandin F2alpha(in). The enzyme catalyses (5Z,8Z,11Z,14Z)-eicosatetraenoate(out) = (5Z,8Z,11Z,14Z)-eicosatetraenoate(in). It carries out the reaction taurocholate(out) = taurocholate(in). The catalysed reaction is glycocholate(out) = glycocholate(in). It catalyses the reaction estrone 3-sulfate(out) = estrone 3-sulfate(in). The enzyme catalyses argipressin(out) = argipressin(in). Functionally, putative organic anion antiporter with apparent broad substrate specificity. Recognizes various substrates including thyroid hormone L-thyroxine, prostanoids such as prostaglandin E1 and E2, bile acids such as taurocholate, glycolate and glycochenodeoxycholate and peptide hormones such as L-arginine vasopressin, likely operating in a tissue-specific manner. The transport mechanism, its electrogenicity and potential tissue-specific counterions remain to be elucidated. In Mus musculus (Mouse), this protein is Solute carrier organic anion transporter family member 3A1 (Slco3a1).